A 307-amino-acid polypeptide reads, in one-letter code: Taste receptor type 2 member 10 (307 aa).

Topologically, residues 1-6 (MLRVVE) are extracellular. A helical membrane pass occupies residues 7–27 (GIFIFVVVSESVFGVLGNGFI). Residues 28–42 (GLVNCIDCAKNKLST) lie on the Cytoplasmic side of the membrane. Residues 43–63 (IGFILTGLAISRIFLIWIIIT) traverse the membrane as a helical segment. Residues 64 to 100 (DGFIQIFSPNIYASGNLIEYISYFWVIGNQSSMWFAT) are Extracellular-facing. The N-linked (GlcNAc...) asparagine glycan is linked to Asn92. A helical transmembrane segment spans residues 101-121 (SLSIFYFLKIANFSNYIFLWL). The Cytoplasmic segment spans residues 122–126 (KSRTN). A helical membrane pass occupies residues 127–147 (MVLPFMIVFLLISSLLNFAYI). Residues 148–179 (AKILNDYKTKNDTVWDLNMYKSEYFIKQILLN) lie on the Extracellular side of the membrane. Asn158 is a glycosylation site (N-linked (GlcNAc...) asparagine). A helical transmembrane segment spans residues 180–200 (LGVIFFFTLSLITCIFLIISL). Over 201 to 227 (WRHNRQMQSNVTGLRDSNTEAHVKAMK) the chain is Cytoplasmic. A helical transmembrane segment spans residues 228 to 248 (VLISFIILFILYFIGMAIEIS). Residues 249-257 (CFTVRENKL) are Extracellular-facing. A helical transmembrane segment spans residues 258–278 (LLMFGMTTTAIYPWGHSFILI). Topologically, residues 279–307 (LGNSKLKQASLRVLQQLKCCEKRKNLRVT) are cytoplasmic.

It belongs to the G-protein coupled receptor T2R family. As to expression, expressed in subsets of taste receptor cells of the tongue and palate epithelium and exclusively in gustducin-positive cells.

It is found in the membrane. In terms of biological role, gustducin-coupled strychnine receptor implicated in the perception of bitter compounds in the oral cavity and the gastrointestinal tract. Signals through PLCB2 and the calcium-regulated cation channel TRPM5. In Homo sapiens (Human), this protein is Taste receptor type 2 member 10 (TAS2R10).